The primary structure comprises 133 residues: Ribonuclease VapC10 (133 aa).

The 118-residue stretch at 2–119 folds into the PINc domain; sequence ILVDSDVLIA…NVWHFPMFEQ (118 aa). Mg(2+) is bound by residues Asp-5 and Asp-92.

It belongs to the PINc/VapC protein family. The cofactor is Mg(2+).

Its function is as follows. Toxic component of a type II toxin-antitoxin (TA) system. An RNase. The cognate antitoxin is VapB10. This Mycobacterium tuberculosis (strain CDC 1551 / Oshkosh) protein is Ribonuclease VapC10.